Here is an 885-residue protein sequence, read N- to C-terminus: Chitin synthase 3 (885 aa).

The disordered stretch occupies residues 1 to 59; sequence MASQYPGHQLDDIPSTNVYRPPPRHEDDEAEHALLHQNSAYQSQYDDPHSRPLTPGQES. Residues 23-34 are compositionally biased toward basic and acidic residues; that stretch reads PRHEDDEAEHAL. Polar residues predominate over residues 36–45; the sequence is HQNSAYQSQY. Transmembrane regions (helical) follow at residues 565–585, 620–640, 650–670, 707–727, 735–755, and 837–857; these read FFLH…WFSL, IINT…FILA, VAYI…IVLS, IVII…FLYM, SFAQ…IYAF, and LVAT…SDSL.

Belongs to the chitin synthase family. Class III subfamily.

The protein localises to the cell membrane. The catalysed reaction is [(1-&gt;4)-N-acetyl-beta-D-glucosaminyl](n) + UDP-N-acetyl-alpha-D-glucosamine = [(1-&gt;4)-N-acetyl-beta-D-glucosaminyl](n+1) + UDP + H(+). Functionally, polymerizes chitin, a structural polymer of the cell wall and septum, by transferring the sugar moiety of UDP-GlcNAc to the non-reducing end of the growing chitin polymer. Is not only stable at different pH, but is also able to tolerate a broad temperature range. With CHS2, plays an important role in virulence. In Exophiala dermatitidis (Black yeast-like fungus), this protein is Chitin synthase 3.